The sequence spans 382 residues: MDTENIADASDIRVKDASGDSDEKGNGTTTEEETVEQKEKRLAELLAAGRRALKVNDIDKASDSLSEATELSSEIYGENHENTFDSLYYYGMATLELAKEESQLLKGPGEKESGDEEQAGNSDDKTDEENGETEKEDGEESGEEEDDDDDTMKLSWEILETARCIAAAKIEALEAEQSGISAIEEWNLKLADVLVLLGEHGISDGKYTQAFEDLDRALNIQRNVLPPSSRKIAQTYILIGNACASDANYDETVQYFGKTKDVLIARQTELKHELERGVDDKEKKSEFENELKELEEMMPGVEEMIADAVHSAAQVEETKKAIKAQFEGFTQVLAKLPQEAGDQKEANDISSLVRRPAKRAVDAPTDNQAVKKEKEEEGTTSI.

A disordered region spans residues 1 to 39 (MDTENIADASDIRVKDASGDSDEKGNGTTTEEETVEQKE). The span at 10–25 (SDIRVKDASGDSDEKG) shows a compositional bias: basic and acidic residues. The TPR 1 repeat unit spans residues 42–75 (LAELLAAGRRALKVNDIDKASDSLSEATELSSEI). Basic and acidic residues predominate over residues 103-112 (QLLKGPGEKE). The tract at residues 103–151 (QLLKGPGEKESGDEEQAGNSDDKTDEENGETEKEDGEESGEEEDDDDDT) is disordered. The span at 125–150 (KTDEENGETEKEDGEESGEEEDDDDD) shows a compositional bias: acidic residues. TPR repeat units follow at residues 191-224 (ADVL…QRNV) and 233-266 (AQTY…LIAR). The stretch at 264–304 (IARQTELKHELERGVDDKEKKSEFENELKELEEMMPGVEEM) forms a coiled coil. The segment at 337–382 (PQEAGDQKEANDISSLVRRPAKRAVDAPTDNQAVKKEKEEEGTTSI) is disordered. The segment covering 369-382 (AVKKEKEEEGTTSI) has biased composition (basic and acidic residues).

Belongs to the NASP family. May interact with zinc finger protein tra-4 and histone deacetylase hda-1.

Its subcellular location is the nucleus. In terms of biological role, promotes normal hermaphrodite (XX) development, in concert with zinc finger protein tra-4 and histone deacetylase hda-1, perhaps as components of a complex. May act redundantly with nasp-2. Involved in innate immune response to B.thuringiensis strain DB27 and S.aureus bacteria. May play a role in the uptake or spreading of dsRNA. The chain is Protein NASP homolog 1 from Caenorhabditis elegans.